The primary structure comprises 144 residues: Protection of telomeres protein 1c (144 aa).

The protein belongs to the telombin family. Expressed at extremely low levels at the limit of detection.

It localises to the nucleus. The protein localises to the chromosome. It is found in the telomere. Binds specifically single-stranded telomeric DNA with weak affinity. Has probably no function in the regulation of telomere length. In Arabidopsis thaliana (Mouse-ear cress), this protein is Protection of telomeres protein 1c.